The following is a 194-amino-acid chain: Porimin (194 aa).

Positions 1–24 (MALCARAALLLGALQVLALPGAVA) are cleaved as a signal peptide. Over 25–151 (QETYAQGSPS…PTKGKGSKFD (127 aa)) the chain is Extracellular. Residues Asn-36, Asn-47, Asn-51, Asn-59, Asn-76, and Asn-114 are each glycosylated (N-linked (GlcNAc...) asparagine). The segment at 88–124 (KVSTPGVSPHVTPSASKSTPKTSASPNSTQTSASMTT) is disordered. The segment covering 99–124 (TPSASKSTPKTSASPNSTQTSASMTT) has biased composition (low complexity). A helical transmembrane segment spans residues 152–172 (AGSFVGGIVLTLGVLSILYIG). Over 173 to 194 (CKMYYSRRGIRYRSIDEHDAII) the chain is Cytoplasmic. Ser-186 bears the Phosphoserine mark.

It belongs to the CD164 family.

The protein resides in the membrane. Implicated in oncotic cell death, characterized by cell swelling, organelle swelling, vacuolization and increased membrane permeability. This chain is Porimin (Tmem123), found in Rattus norvegicus (Rat).